The chain runs to 487 residues: 3-octaprenyl-4-hydroxybenzoate carboxy-lyase (487 aa).

Position 172 (Asn-172) interacts with Mn(2+). Prenylated FMN-binding positions include 175 to 177 (IYR), 189 to 191 (RWL), and 194 to 195 (RG). Glu-238 contacts Mn(2+). The active-site Proton donor is the Asp-287.

This sequence belongs to the UbiD family. As to quaternary structure, homohexamer. It depends on prenylated FMN as a cofactor. Mn(2+) serves as cofactor.

The protein localises to the cell membrane. The enzyme catalyses a 4-hydroxy-3-(all-trans-polyprenyl)benzoate + H(+) = a 2-(all-trans-polyprenyl)phenol + CO2. It functions in the pathway cofactor biosynthesis; ubiquinone biosynthesis. In terms of biological role, catalyzes the decarboxylation of 3-octaprenyl-4-hydroxy benzoate to 2-octaprenylphenol, an intermediate step in ubiquinone biosynthesis. This chain is 3-octaprenyl-4-hydroxybenzoate carboxy-lyase, found in Actinobacillus pleuropneumoniae serotype 3 (strain JL03).